An 849-amino-acid polypeptide reads, in one-letter code: Thrombospondin type-1 domain-containing protein 1 (849 aa).

The signal sequence occupies residues M1–A24. At E25–N413 the chain is on the extracellular side. Residues N39, N50, N55, N66, N77, N106, and N303 are each glycosylated (N-linked (GlcNAc...) asparagine). Residues I340–A393 enclose the TSP type-1 domain. Cystine bridges form between C352–C387, C356–C392, and C367–C377. Residues V414–T434 form a helical membrane-spanning segment. Residues L435 to I849 are Cytoplasmic-facing. Position 463 is a phosphoserine (S463). Disordered regions lie at residues S472–F516, K595–S799, and G828–I849. Low complexity predominate over residues S479 to G493. The span at S636–A651 shows a compositional bias: basic residues. Residues S652–S666 show a composition bias toward basic and acidic residues. Positions S720–P732 are enriched in pro residues.

Part of a complex composed of THSD1, PTK2/FAK1, TLN1 and VCL. Interacts with TLN1.

The protein localises to the endosome membrane. It localises to the cell junction. The protein resides in the focal adhesion. Is a positive regulator of nascent focal adhesion assembly, involved in the modulation of endothelial cell attachment to the extracellular matrix. The protein is Thrombospondin type-1 domain-containing protein 1 (THSD1) of Bos taurus (Bovine).